Consider the following 95-residue polypeptide: Ribonuclease kappa (95 aa).

Helical transmembrane passes span 12–32 (GLII…FFYI) and 68–88 (CWIA…QFYM).

The protein belongs to the RNase K family.

Its subcellular location is the membrane. Its function is as follows. Endoribonuclease. (Microbial infection) Required for the initial stages of clathrin-mediated endocytic uptake of a diverse set of flaviviruses, including dengue and West Nile. Not required for clathrin-mediated endocytosis and macropinocytosis. The protein is Ribonuclease kappa of Drosophila melanogaster (Fruit fly).